A 753-amino-acid polypeptide reads, in one-letter code: Cytoplasmic polyadenylation element-binding protein 3 (753 aa).

Residues 111–286 form a disordered region; sequence VGESTPSSAG…NGSWHGELPP (176 aa). Basic and acidic residues-rich tracts occupy residues 131–142 and 175–188; these read KPTEKISVDEPP and FGKE…EVVK. Residues 227–239 are compositionally biased toward low complexity; the sequence is SPAKISSNSSSSS. Polar residues predominate over residues 265-279; that stretch reads SRQGLSNRDNLSNGS. The RRM domain occupies 298–320; it reads IFVGGVPWDITEAALKDSFGEFG. The segment at 567 to 589 is disordered; that stretch reads KAYAGPHRRPHLTSNSLSKSHGC. Polar residues predominate over residues 578–589; that stretch reads LTSNSLSKSHGC.

Its function is as follows. Cytoplasmic polyadenylation element binding protein that binds to and regulates the translation of specific mRNAs. This chain is Cytoplasmic polyadenylation element-binding protein 3 (cpb-3), found in Caenorhabditis briggsae.